Reading from the N-terminus, the 197-residue chain is Small ribosomal subunit protein uS4B (197 aa).

The 63-residue stretch at serine 88–asparagine 150 folds into the S4 RNA-binding domain.

The protein belongs to the universal ribosomal protein uS4 family. As to quaternary structure, part of the 30S ribosomal subunit. Contacts protein S5. The interaction surface between S4 and S5 is involved in control of translational fidelity.

One of the primary rRNA binding proteins, it binds directly to 16S rRNA where it nucleates assembly of the body of the 30S subunit. In terms of biological role, with S5 and S12 plays an important role in translational accuracy. This Clostridium perfringens (strain ATCC 13124 / DSM 756 / JCM 1290 / NCIMB 6125 / NCTC 8237 / Type A) protein is Small ribosomal subunit protein uS4B.